The primary structure comprises 492 residues: MTLWINGDWVTGQGALRVKRNPVSGEVLWQGNDADAAQVGQACRAARAAFPRWARLSFGDRQVRVERFAGLLESNKAELTAIIARETGKPRWEAATEVTAMINKIAISIKAYHVRTGEQRSEMPDGAASLRHRPHGVLAVFGPYNFPGHLPNGHIVPALLAGNTIIFKPSELTPWSGDAVMRLWQQAGLPPGVLNLVQGGRATGQALSALEDLDGLLFTGSANTGYQLHRQLSGQPEKILALEMGGNNPLIIDEVADIDAAVHLTIQSAFVTAGQRCTCARRLFLKSGTQGDAFLARLVAVSQRLTPGTWDDEPQPFIGGLISEQAAQQVVTAWQELEAMGGRTLLAPRLLQAGTSLLTPGIIEMTGVTGLPDEEVFGPLLRVWRYDTFDEAIRMANNTRFGLSCGLVSPEREKFDQLLLEARAGIVNWNKPLTGAASTAPFGGIGASGNHRPSAWYAADYCAWPMASLESDSLTLPATLNPGLDFSDEVVR.

An NAD(+)-binding site is contributed by 220–225; the sequence is GSANTG. Catalysis depends on residues Glu243 and Cys277.

Belongs to the aldehyde dehydrogenase family. AstD subfamily.

The enzyme catalyses N-succinyl-L-glutamate 5-semialdehyde + NAD(+) + H2O = N-succinyl-L-glutamate + NADH + 2 H(+). The protein operates within amino-acid degradation; L-arginine degradation via AST pathway; L-glutamate and succinate from L-arginine: step 4/5. Functionally, catalyzes the NAD-dependent reduction of succinylglutamate semialdehyde into succinylglutamate. In Escherichia coli O6:K15:H31 (strain 536 / UPEC), this protein is N-succinylglutamate 5-semialdehyde dehydrogenase.